The chain runs to 704 residues: Phosphoribosylformylglycinamidine synthase subunit PurL (704 aa).

The active site involves His-32. Tyr-35 lines the ATP pocket. Glu-76 is a binding site for Mg(2+). Substrate-binding positions include 77–80 (SHNH) and Arg-99. The active-site Proton acceptor is His-78. Position 100 (Asp-100) interacts with Mg(2+). Gln-224 is a substrate binding site. Asp-252 is a Mg(2+) binding site. A substrate-binding site is contributed by 296 to 298 (ESQ). ATP-binding residues include Asp-471 and Gly-508. Asn-509 contacts Mg(2+). Ser-511 contributes to the substrate binding site.

The protein belongs to the FGAMS family. As to quaternary structure, monomer. Part of the FGAM synthase complex composed of 1 PurL, 1 PurQ and 2 PurS subunits.

The protein localises to the cytoplasm. It catalyses the reaction N(2)-formyl-N(1)-(5-phospho-beta-D-ribosyl)glycinamide + L-glutamine + ATP + H2O = 2-formamido-N(1)-(5-O-phospho-beta-D-ribosyl)acetamidine + L-glutamate + ADP + phosphate + H(+). The protein operates within purine metabolism; IMP biosynthesis via de novo pathway; 5-amino-1-(5-phospho-D-ribosyl)imidazole from N(2)-formyl-N(1)-(5-phospho-D-ribosyl)glycinamide: step 1/2. Its function is as follows. Part of the phosphoribosylformylglycinamidine synthase complex involved in the purines biosynthetic pathway. Catalyzes the ATP-dependent conversion of formylglycinamide ribonucleotide (FGAR) and glutamine to yield formylglycinamidine ribonucleotide (FGAM) and glutamate. The FGAM synthase complex is composed of three subunits. PurQ produces an ammonia molecule by converting glutamine to glutamate. PurL transfers the ammonia molecule to FGAR to form FGAM in an ATP-dependent manner. PurS interacts with PurQ and PurL and is thought to assist in the transfer of the ammonia molecule from PurQ to PurL. The protein is Phosphoribosylformylglycinamidine synthase subunit PurL of Pyrococcus furiosus (strain ATCC 43587 / DSM 3638 / JCM 8422 / Vc1).